The following is an 81-amino-acid chain: ATP synthase subunit c, chloroplastic (81 aa).

2 helical membrane passes run 7–27 (AASV…PGIG) and 57–77 (LAFM…LLFA).

It belongs to the ATPase C chain family. As to quaternary structure, F-type ATPases have 2 components, F(1) - the catalytic core - and F(0) - the membrane proton channel. F(1) has five subunits: alpha(3), beta(3), gamma(1), delta(1), epsilon(1). F(0) has four main subunits: a(1), b(1), b'(1) and c(10-14). The alpha and beta chains form an alternating ring which encloses part of the gamma chain. F(1) is attached to F(0) by a central stalk formed by the gamma and epsilon chains, while a peripheral stalk is formed by the delta, b and b' chains.

Its subcellular location is the plastid. The protein localises to the chloroplast thylakoid membrane. Its function is as follows. F(1)F(0) ATP synthase produces ATP from ADP in the presence of a proton or sodium gradient. F-type ATPases consist of two structural domains, F(1) containing the extramembraneous catalytic core and F(0) containing the membrane proton channel, linked together by a central stalk and a peripheral stalk. During catalysis, ATP synthesis in the catalytic domain of F(1) is coupled via a rotary mechanism of the central stalk subunits to proton translocation. Functionally, key component of the F(0) channel; it plays a direct role in translocation across the membrane. A homomeric c-ring of between 10-14 subunits forms the central stalk rotor element with the F(1) delta and epsilon subunits. The polypeptide is ATP synthase subunit c, chloroplastic (Cryptomeria japonica (Japanese cedar)).